Here is a 43-residue protein sequence, read N- to C-terminus: MTTANSEEKTYPIFTVRWLSVHALGIPTIFFLGAITAMQFIQR.

The helical transmembrane segment at Trp18–Ala34 threads the bilayer. His22 provides a ligand contact to heme.

The protein belongs to the PsbE/PsbF family. In terms of assembly, heterodimer of an alpha subunit and a beta subunit. PSII is composed of 1 copy each of membrane proteins PsbA, PsbB, PsbC, PsbD, PsbE, PsbF, PsbH, PsbI, PsbJ, PsbK, PsbL, PsbM, PsbT, PsbX, PsbY, PsbZ, Psb30/Ycf12, at least 3 peripheral proteins of the oxygen-evolving complex and a large number of cofactors. It forms dimeric complexes. It depends on heme b as a cofactor.

It localises to the plastid. The protein resides in the chloroplast thylakoid membrane. This b-type cytochrome is tightly associated with the reaction center of photosystem II (PSII). PSII is a light-driven water:plastoquinone oxidoreductase that uses light energy to abstract electrons from H(2)O, generating O(2) and a proton gradient subsequently used for ATP formation. It consists of a core antenna complex that captures photons, and an electron transfer chain that converts photonic excitation into a charge separation. The polypeptide is Cytochrome b559 subunit beta (Stigeoclonium helveticum (Green alga)).